Consider the following 349-residue polypeptide: Dihydroorotase (349 aa).

2 residues coordinate Zn(2+): His-17 and His-19. Substrate-binding positions include 19 to 21 and Asn-45; that span reads HLR. Zn(2+) is bound by residues Lys-103, His-140, and His-178. At Lys-103 the chain carries N6-carboxylysine. Residue His-140 coordinates substrate. Substrate is bound at residue Leu-224. Asp-252 is a Zn(2+) binding site. The active site involves Asp-252. Substrate is bound by residues His-256 and Ala-268.

Belongs to the metallo-dependent hydrolases superfamily. DHOase family. Class II DHOase subfamily. As to quaternary structure, homodimer. Zn(2+) is required as a cofactor.

The enzyme catalyses (S)-dihydroorotate + H2O = N-carbamoyl-L-aspartate + H(+). It functions in the pathway pyrimidine metabolism; UMP biosynthesis via de novo pathway; (S)-dihydroorotate from bicarbonate: step 3/3. Catalyzes the reversible cyclization of carbamoyl aspartate to dihydroorotate. This is Dihydroorotase from Buchnera aphidicola subsp. Schizaphis graminum (strain Sg).